The chain runs to 320 residues: Undecaprenyl-diphosphatase (320 aa).

The next 8 helical transmembrane spans lie at 9-29 (FVLISAVSAALSVVLFPLEVF), 82-102 (GVAFTAIIQLGSIAAVLWYFW), 130-150 (LGIVLGTIPIVFFGLLIKTFI), 161-181 (LGAIAVASIVMSLLLGVGEKL), 191-211 (LTMQDGLLMGLAQALTLIPGV), 236-256 (FLLGIPAITLAGLVELKDLLA), 265-285 (LPLIMGVISAAIFSYLAIAGL), and 296-316 (VFIWYRLVFGVAILGAISAGI).

This sequence belongs to the UppP family.

It is found in the cell inner membrane. It catalyses the reaction di-trans,octa-cis-undecaprenyl diphosphate + H2O = di-trans,octa-cis-undecaprenyl phosphate + phosphate + H(+). In terms of biological role, catalyzes the dephosphorylation of undecaprenyl diphosphate (UPP). Confers resistance to bacitracin. This is Undecaprenyl-diphosphatase from Nostoc sp. (strain PCC 7120 / SAG 25.82 / UTEX 2576).